Reading from the N-terminus, the 194-residue chain is tRNA (pseudouridine(54)-N(1))-methyltransferase (194 aa).

Leu125 is an S-adenosyl-L-methionine binding site.

It belongs to the methyltransferase superfamily. TrmY family. In terms of assembly, homodimer.

The protein resides in the cytoplasm. It catalyses the reaction pseudouridine(54) in tRNA + S-adenosyl-L-methionine = N(1)-methylpseudouridine(54) in tRNA + S-adenosyl-L-homocysteine + H(+). Its function is as follows. Specifically catalyzes the N1-methylation of pseudouridine at position 54 (Psi54) in tRNAs. The chain is tRNA (pseudouridine(54)-N(1))-methyltransferase from Methanospirillum hungatei JF-1 (strain ATCC 27890 / DSM 864 / NBRC 100397 / JF-1).